A 453-amino-acid chain; its full sequence is Phosphoglucosamine mutase (453 aa).

Catalysis depends on Ser-102, which acts as the Phosphoserine intermediate. Residues Ser-102, Asp-244, Asp-246, and Asp-248 each contribute to the Mg(2+) site. Ser-102 carries the post-translational modification Phosphoserine.

It belongs to the phosphohexose mutase family. Mg(2+) serves as cofactor. Post-translationally, activated by phosphorylation.

It carries out the reaction alpha-D-glucosamine 1-phosphate = D-glucosamine 6-phosphate. In terms of biological role, catalyzes the conversion of glucosamine-6-phosphate to glucosamine-1-phosphate. The polypeptide is Phosphoglucosamine mutase (Pelobacter propionicus (strain DSM 2379 / NBRC 103807 / OttBd1)).